Reading from the N-terminus, the 161-residue chain is Interleukin-17F (161 aa).

The N-terminal stretch at 1–28 (MKGSCETTMVKSLLLLMLGFAIISSGAA) is a signal peptide. The N-linked (GlcNAc...) asparagine glycan is linked to Asn83. 2 disulfide bridges follow: Cys100/Cys150 and Cys105/Cys152.

The protein belongs to the IL-17 family. In terms of assembly, homodimer; disulfide-linked. Heterodimer with IL17A (IL17A-IL17F). Forms complexes with IL17RA and IL17RC receptors with 2:1 binding stoichiometry: two receptor chains for one interleukin molecule. IL17F homodimer forms predominantly complexes with IL17RC homodimer, whereas IL17A-IL17F favors complexes with IL17RA-IL17RC. IL17RA and IL17RC chains cannot distinguish between IL17A and IL17F molecules, potentially enabling the formation of topologically distinct complexes.

Its subcellular location is the secreted. Functionally, effector cytokine of innate and adaptive immune system involved in antimicrobial host defense and maintenance of tissue integrity. IL17A-IL17F signals via IL17RA-IL17RC heterodimeric receptor complex, triggering homotypic interaction of IL17RA and IL17RC chains with TRAF3IP2 adapter through SEFIR domains. This leads to downstream TRAF6-mediated activation of NF-kappa-B and MAPkinase pathways ultimately resulting in transcriptional activation of cytokines, chemokines, antimicrobial peptides and matrix metalloproteinases, with potential strong immune inflammation. IL17A-IL17F is primarily involved in host defense against extracellular bacteria and fungi by inducing neutrophilic inflammation. As signature effector cytokine of T-helper 17 cells (Th17), primarily induces neutrophil activation and recruitment at infection and inflammatory sites. Stimulates the production of antimicrobial beta-defensins DEFB1, DEFB103A, and DEFB104A by mucosal epithelial cells, limiting the entry of microbes through the epithelial barriers. IL17F homodimer can signal via IL17RC homodimeric receptor complex, triggering downstream activation of TRAF6 and NF-kappa-B signaling pathway. Via IL17RC induces transcriptional activation of IL33, a potent cytokine that stimulates group 2 innate lymphoid cells and adaptive T-helper 2 cells involved in pulmonary allergic response to fungi. Likely via IL17RC, promotes sympathetic innervation of peripheral organs by coordinating the communication between gamma-delta T cells and parenchymal cells. Stimulates sympathetic innervation of thermogenic adipose tissue by driving TGFB1 expression. Regulates the composition of intestinal microbiota and immune tolerance by inducing antimicrobial proteins that specifically control the growth of commensal Firmicutes and Bacteroidetes. The protein is Interleukin-17F (Il17f) of Rattus norvegicus (Rat).